Here is a 245-residue protein sequence, read N- to C-terminus: Ribonuclease PH (245 aa).

Phosphate-binding positions include R86 and 124 to 126 (GTR).

The protein belongs to the RNase PH family. Homohexameric ring arranged as a trimer of dimers.

The enzyme catalyses tRNA(n+1) + phosphate = tRNA(n) + a ribonucleoside 5'-diphosphate. Functionally, phosphorolytic 3'-5' exoribonuclease that plays an important role in tRNA 3'-end maturation. Removes nucleotide residues following the 3'-CCA terminus of tRNAs; can also add nucleotides to the ends of RNA molecules by using nucleoside diphosphates as substrates, but this may not be physiologically important. Probably plays a role in initiation of 16S rRNA degradation (leading to ribosome degradation) during starvation. The chain is Ribonuclease PH from Bacillus velezensis (strain DSM 23117 / BGSC 10A6 / LMG 26770 / FZB42) (Bacillus amyloliquefaciens subsp. plantarum).